A 750-amino-acid chain; its full sequence is Amyloid-beta A4 precursor protein-binding family A member 2 (750 aa).

Disordered stretches follow at residues 1 to 94 (MAHR…PEEE) and 143 to 346 (DSVG…IPET). The residue at position 11 (serine 11) is a Phosphoserine. Positions 70-80 (GDSSSDYVNNT) are enriched in polar residues. The span at 81 to 94 (SEEEDYDEGLPEEE) shows a compositional bias: acidic residues. Residues 185 to 271 (HYCSSKESYQ…STEACPPSDT (87 aa)) are STXBP1-binding. Serine 209 is subject to Phosphoserine. Positions 219–228 (DLEEQEEDID) are enriched in acidic residues. Composition is skewed to polar residues over residues 238-248 (LSMTSITSASE) and 332-344 (SDLNGPTDNNNIP). In terms of domain architecture, PID spans 367 to 556 (LIDGIIFAAN…IINTQEMYND (190 aa)). PDZ domains are found at residues 569 to 654 (ELQL…NIVS) and 660 to 736 (TVLI…MPAA).

Part of a multimeric complex containing STXBP1 and syntaxin-1. Binds to the cytoplasmic domain of amyloid-beta protein, and to the nuclear factor NF-kappa-B/p65 via its PDZ domain. Interacts with the N-terminal domain of NECAB3. As to expression, specifically expressed in neurons, predominantly of the cerebellum, hippocampus, and spinal cord. Lesser extent in neurons of the cerebral cortex and anterior thalmic nuclei.

Putative function in synaptic vesicle exocytosis by binding to STXBP1, an essential component of the synaptic vesicle exocytotic machinery. May modulate processing of the amyloid-beta precursor protein (APP) and hence formation of APP-beta. This Mus musculus (Mouse) protein is Amyloid-beta A4 precursor protein-binding family A member 2 (Apba2).